A 283-amino-acid polypeptide reads, in one-letter code: Shikimate dehydrogenase (NADP(+)) (283 aa).

Residues 19–21 (SFS) and Thr-66 each bind shikimate. Lys-70 serves as the catalytic Proton acceptor. Residue Glu-82 coordinates NADP(+). Positions 91 and 106 each coordinate shikimate. NADP(+) is bound by residues 129 to 133 (GAGGA) and Ile-225. Tyr-227 provides a ligand contact to shikimate. Gly-248 lines the NADP(+) pocket.

This sequence belongs to the shikimate dehydrogenase family. As to quaternary structure, homodimer.

The catalysed reaction is shikimate + NADP(+) = 3-dehydroshikimate + NADPH + H(+). It participates in metabolic intermediate biosynthesis; chorismate biosynthesis; chorismate from D-erythrose 4-phosphate and phosphoenolpyruvate: step 4/7. In terms of biological role, involved in the biosynthesis of the chorismate, which leads to the biosynthesis of aromatic amino acids. Catalyzes the reversible NADPH linked reduction of 3-dehydroshikimate (DHSA) to yield shikimate (SA). This is Shikimate dehydrogenase (NADP(+)) from Methanosphaera stadtmanae (strain ATCC 43021 / DSM 3091 / JCM 11832 / MCB-3).